Consider the following 171-residue polypeptide: S-ribosylhomocysteine lyase (171 aa).

3 residues coordinate Fe cation: His54, His58, and Cys128.

Belongs to the LuxS family. Homodimer. Fe cation is required as a cofactor.

The enzyme catalyses S-(5-deoxy-D-ribos-5-yl)-L-homocysteine = (S)-4,5-dihydroxypentane-2,3-dione + L-homocysteine. Functionally, involved in the synthesis of autoinducer 2 (AI-2) which is secreted by bacteria and is used to communicate both the cell density and the metabolic potential of the environment. The regulation of gene expression in response to changes in cell density is called quorum sensing. Catalyzes the transformation of S-ribosylhomocysteine (RHC) to homocysteine (HC) and 4,5-dihydroxy-2,3-pentadione (DPD). The sequence is that of S-ribosylhomocysteine lyase from Campylobacter curvus (strain 525.92).